The primary structure comprises 276 residues: MAIKKYKPTSAGRRNMSVSDFAEITTDKPEKSLLAPLHKKGGRNNQGRLTVRHQGGGHKRQYRVIDFKRNKDGIPGRVATIEYDPNRSANIALINYADGEKRYILAPKGLTVGTVIVSGPDADIKTGNALPLANIPVGTVIHNIELRPGKGGQLVRSAGTEAQLLGKEGDYALVRLNSGETRYILSTCRATIGQVGNVEHELINIGKAGRSRWKGIRPTVRGSVMNPNDHPHGGGEGKAPIGRPSPMSPWGKPTLGYKTRKKNKHSDKYIVRRRKK.

Disordered regions lie at residues 35 to 55 (APLH…RHQG) and 222 to 276 (GSVM…RRKK). Residues 258-276 (KTRKKNKHSDKYIVRRRKK) are compositionally biased toward basic residues.

This sequence belongs to the universal ribosomal protein uL2 family. As to quaternary structure, part of the 50S ribosomal subunit. Forms a bridge to the 30S subunit in the 70S ribosome.

In terms of biological role, one of the primary rRNA binding proteins. Required for association of the 30S and 50S subunits to form the 70S ribosome, for tRNA binding and peptide bond formation. It has been suggested to have peptidyltransferase activity; this is somewhat controversial. Makes several contacts with the 16S rRNA in the 70S ribosome. The chain is Large ribosomal subunit protein uL2 from Shouchella clausii (strain KSM-K16) (Alkalihalobacillus clausii).